The primary structure comprises 414 residues: 3-isopropylmalate dehydratase large subunit (414 aa).

[4Fe-4S] cluster is bound by residues Cys-295, Cys-353, and Cys-356.

Belongs to the aconitase/IPM isomerase family. LeuC type 2 subfamily. Heterodimer of LeuC and LeuD. [4Fe-4S] cluster is required as a cofactor.

The catalysed reaction is (2R,3S)-3-isopropylmalate = (2S)-2-isopropylmalate. Its pathway is amino-acid biosynthesis; L-leucine biosynthesis; L-leucine from 3-methyl-2-oxobutanoate: step 2/4. In terms of biological role, catalyzes the isomerization between 2-isopropylmalate and 3-isopropylmalate, via the formation of 2-isopropylmaleate. In Pyrobaculum islandicum (strain DSM 4184 / JCM 9189 / GEO3), this protein is 3-isopropylmalate dehydratase large subunit.